Consider the following 1390-residue polypeptide: DNA-directed RNA polymerase subunit beta (1390 aa).

This sequence belongs to the RNA polymerase beta chain family. In terms of assembly, the RNAP catalytic core consists of 2 alpha, 1 beta, 1 beta' and 1 omega subunit. When a sigma factor is associated with the core the holoenzyme is formed, which can initiate transcription.

The catalysed reaction is RNA(n) + a ribonucleoside 5'-triphosphate = RNA(n+1) + diphosphate. In terms of biological role, DNA-dependent RNA polymerase catalyzes the transcription of DNA into RNA using the four ribonucleoside triphosphates as substrates. The sequence is that of DNA-directed RNA polymerase subunit beta from Chromobacterium violaceum (strain ATCC 12472 / DSM 30191 / JCM 1249 / CCUG 213 / NBRC 12614 / NCIMB 9131 / NCTC 9757 / MK).